Reading from the N-terminus, the 482-residue chain is Probable polyamine transporter At1g31820 (482 aa).

11 consecutive transmembrane segments (helical) span residues valine 36–alanine 56, leucine 66–isoleucine 86, phenylalanine 94–phenylalanine 114, valine 143–leucine 163, leucine 171–valine 191, valine 254–leucine 274, glycine 294–alanine 314, threonine 344–phenylalanine 364, isoleucine 367–valine 387, threonine 406–leucine 426, and isoleucine 429–leucine 449.

The protein belongs to the amino acid-polyamine-organocation (APC) superfamily. Polyamine:cation symporter (PHS) (TC 2.A.3.12) family.

Its subcellular location is the cell membrane. Probable cell membrane polyamine/proton symporter involved in the polyamine uptake in cells. This Arabidopsis thaliana (Mouse-ear cress) protein is Probable polyamine transporter At1g31820.